A 188-amino-acid polypeptide reads, in one-letter code: dTTP/UTP pyrophosphatase (188 aa).

The Proton acceptor role is filled by aspartate 67.

This sequence belongs to the Maf family. YhdE subfamily. A divalent metal cation is required as a cofactor.

It is found in the cytoplasm. The enzyme catalyses dTTP + H2O = dTMP + diphosphate + H(+). The catalysed reaction is UTP + H2O = UMP + diphosphate + H(+). Its function is as follows. Nucleoside triphosphate pyrophosphatase that hydrolyzes dTTP and UTP. May have a dual role in cell division arrest and in preventing the incorporation of modified nucleotides into cellular nucleic acids. This Thermococcus kodakarensis (strain ATCC BAA-918 / JCM 12380 / KOD1) (Pyrococcus kodakaraensis (strain KOD1)) protein is dTTP/UTP pyrophosphatase.